The following is a 69-amino-acid chain: Sec-independent protein translocase protein TatA (69 aa).

Residues 1 to 21 (MFGLGGQELVLILLIVLLLFG) traverse the membrane as a helical segment. Over residues 47 to 63 (EEEFNKSMDDNPKKEKA) the composition is skewed to basic and acidic residues. Positions 47–69 (EEEFNKSMDDNPKKEKATTASKS) are disordered.

It belongs to the TatA/E family. As to quaternary structure, forms a complex with TatC.

It localises to the cell inner membrane. Its function is as follows. Part of the twin-arginine translocation (Tat) system that transports large folded proteins containing a characteristic twin-arginine motif in their signal peptide across membranes. TatA could form the protein-conducting channel of the Tat system. This Chlorobium chlorochromatii (strain CaD3) protein is Sec-independent protein translocase protein TatA.